Reading from the N-terminus, the 1236-residue chain is DNA-directed RNA polymerase II subunit RPB2 (1236 aa).

Residue Asp846 coordinates Mg(2+). Residues Cys1172, Cys1175, Cys1191, and Cys1194 each contribute to the Zn(2+) site. The C4-type zinc-finger motif lies at 1172-1194 (CGVCGLMSVIANLKKNQFECRSC).

This sequence belongs to the RNA polymerase beta chain family. In terms of assembly, component of the RNA polymerase II (Pol II) complex consisting of 12 subunits.

It localises to the nucleus. It catalyses the reaction RNA(n) + a ribonucleoside 5'-triphosphate = RNA(n+1) + diphosphate. Functionally, DNA-dependent RNA polymerase catalyzes the transcription of DNA into RNA using the four ribonucleoside triphosphates as substrates. Second largest component of RNA polymerase II which synthesizes mRNA precursors and many functional non-coding RNAs. Proposed to contribute to the polymerase catalytic activity and forms the polymerase active center together with the largest subunit. Pol II is the central component of the basal RNA polymerase II transcription machinery. It is composed of mobile elements that move relative to each other. RPB2 is part of the core element with the central large cleft, the clamp element that moves to open and close the cleft and the jaws that are thought to grab the incoming DNA template. The polypeptide is DNA-directed RNA polymerase II subunit RPB2 (RPB2) (Meyerozyma guilliermondii (strain ATCC 6260 / CBS 566 / DSM 6381 / JCM 1539 / NBRC 10279 / NRRL Y-324) (Yeast)).